The sequence spans 524 residues: Importin subunit alpha-1 (524 aa).

Residues 1–42 (MGDEFRPSHEERSKMYKSNVRDQNEMRRKRREDEVQIRKNRR) are disordered. Positions 1–59 (MGDEFRPSHEERSKMYKSNVRDQNEMRRKRREDEVQIRKNRRDEKFERNRQITVQRSLS) constitute an IBB domain.

This sequence belongs to the importin alpha family. As to quaternary structure, forms a complex with an importin beta subunit. As to expression, adult germline tissues.

The protein localises to the cytoplasm. Its function is as follows. Binds specifically and directly to substrates containing either a simple or bipartite NLS motif. Promotes docking of import substrates to the nuclear envelope. Seems to act as a cytosolic receptor for both simple and bipartite NLS motifs. This is Importin subunit alpha-1 (ima-1) from Caenorhabditis elegans.